The sequence spans 193 residues: Ion-translocating oxidoreductase complex subunit A (193 aa).

Transmembrane regions (helical) follow at residues 5–25 (LLLLVGTVLINNFVLVKFLGL), 39–59 (IGMGLATTFVMTLASACSYLM), 63–83 (ILIPLNIAYLRTLAFILVIAV), 102–122 (LLGIFLPLITTNCAVLGVALL), 134–154 (IIYGFGAATGFSLVLILFAAM), and 171–191 (SIAMITAGLMSLAFMGFTGLI).

Belongs to the NqrDE/RnfAE family. In terms of assembly, the complex is composed of six subunits: RnfA, RnfB, RnfC, RnfD, RnfE and RnfG.

The protein localises to the cell inner membrane. In terms of biological role, part of a membrane-bound complex that couples electron transfer with translocation of ions across the membrane. The polypeptide is Ion-translocating oxidoreductase complex subunit A (Aeromonas hydrophila subsp. hydrophila (strain ATCC 7966 / DSM 30187 / BCRC 13018 / CCUG 14551 / JCM 1027 / KCTC 2358 / NCIMB 9240 / NCTC 8049)).